The sequence spans 141 residues: Large ribosomal subunit protein uL11c (141 aa).

Belongs to the universal ribosomal protein uL11 family. As to quaternary structure, part of the ribosomal stalk of the 50S ribosomal subunit. Interacts with L10 and the large rRNA to form the base of the stalk. L10 forms an elongated spine to which L12 dimers bind in a sequential fashion forming a multimeric L10(L12)X complex.

The protein localises to the plastid. Its subcellular location is the chloroplast. Its function is as follows. Forms part of the ribosomal stalk which helps the ribosome interact with GTP-bound translation factors. The polypeptide is Large ribosomal subunit protein uL11c (Pyropia yezoensis (Susabi-nori)).